The primary structure comprises 1086 residues: Ribonuclease 3 (1086 aa).

Disordered stretches follow at residues 1-77 (MSDE…DSPR) and 158-233 (CHSM…LRNF). A compositionally biased stretch (basic residues) spans 13-23 (PKHKRARRKKY). The segment covering 24–35 (QKEYQERHKEEM) has biased composition (basic and acidic residues). Positions 43–53 (FQNQPSTSSAP) are enriched in polar residues. Residues 159–168 (HSMKGRKTPK) are compositionally biased toward basic residues. Residues 181–190 (VSDDSNDSQD) show a composition bias toward acidic residues. The segment covering 191-201 (EASTSEPTNRQ) has biased composition (polar residues). Over residues 203 to 217 (PEADKTGEVKDEKQT) the composition is skewed to basic and acidic residues. RNase III domains follow at residues 607–781 (LDVF…LDGG) and 833–957 (FHAL…VDRG). Residues E694, N767, E770, E873, D943, and E946 each contribute to the Mg(2+) site. The region spanning 984–1059 (DAKSHLQQWC…AELALANLES (76 aa)) is the DRBM domain.

The protein belongs to the ribonuclease III family. The cofactor is Mg(2+). Requires Mn(2+) as cofactor.

The protein resides in the nucleus. The catalysed reaction is Endonucleolytic cleavage to 5'-phosphomonoester.. Its function is as follows. Executes the initial step of microRNA (miRNA) processing in the nucleus, that is the cleavage of pri-miRNA to release pre-miRNA. Involved in pre-rRNA processing. Cleaves double-strand RNA and does not cleave single-strand RNA. Involved in fertility. Required for the function or synthesis of the let-7 miRNA. The chain is Ribonuclease 3 (drsh-1) from Caenorhabditis elegans.